A 332-amino-acid polypeptide reads, in one-letter code: Autoinducer 2 import system permease protein LsrD (332 aa).

10 consecutive transmembrane segments (helical) span residues Tyr7–Ile27, Ile45–Ile65, Thr70–Leu90, Ala91–Ile111, Leu118–Met138, Phe162–Leu182, Val216–Gly236, Ser240–Asn260, Ile261–Leu281, and Ala288–Val308.

The protein belongs to the binding-protein-dependent transport system permease family. AraH/RbsC subfamily. In terms of assembly, the complex is composed of two ATP-binding proteins (LsrA), two transmembrane proteins (LsrC and LsrD) and a solute-binding protein (LsrB).

Its subcellular location is the cell inner membrane. Functionally, part of the ABC transporter complex LsrABCD involved in autoinducer 2 (AI-2) import. Probably responsible for the translocation of the substrate across the membrane. The sequence is that of Autoinducer 2 import system permease protein LsrD (lsrD) from Salmonella paratyphi A (strain ATCC 9150 / SARB42).